A 483-amino-acid polypeptide reads, in one-letter code: MGFTLAIVGRPNVGKSTLFNRLVGRKLALVDDLPGVTRDRRIHDAKLYDLKFQVIDTAGLEEAANDSLEARMRAQTEAAISEADAVLFVIDAKAGITPADSTFAEAVRRSGKPVVLVANKAEARGSEAGMYDAFQLGLGEPCPISAEHGQGMPDLRDAIVELLGEERVFAEERQEEAADEVFTPAAVGALVGDDIEDPDAEEIPAYDATKPLRIAIVGRPNAGKSTLINTMLGEDRLLTGPEAGITRDSISADWEWHGRKINLFDTAGMRRKARVQEKLEKLSVADSLRAIRFAEVVIIVLDATIPFEKQDLQIADLIIREGRAPVIAFNKWDLIEDRQMVLADLYEKTARLLPQVRGLRAVPISGERGQGIDKLMENVVKTHEIWNRRISTGRLNRWLEGVIAHQPPPAVSGRRLKVKYMTQVKTRPPGFVVSCSRPDAMPQSYVRYLINGLRETFDMPGVPIRLSLRTSDNPFAGRAKKKK.

EngA-type G domains lie at 3 to 167 (FTLA…GEER) and 212 to 387 (LRIA…EIWN). Residues 9 to 16 (GRPNVGKS), 56 to 60 (DTAGL), 119 to 122 (NKAE), 218 to 225 (GRPNAGKS), 265 to 269 (DTAGM), and 330 to 333 (NKWD) each bind GTP. Residues 388 to 472 (RRISTGRLNR…PIRLSLRTSD (85 aa)) enclose the KH-like domain.

The protein belongs to the TRAFAC class TrmE-Era-EngA-EngB-Septin-like GTPase superfamily. EngA (Der) GTPase family. In terms of assembly, associates with the 50S ribosomal subunit.

In terms of biological role, GTPase that plays an essential role in the late steps of ribosome biogenesis. This is GTPase Der from Brucella abortus (strain 2308).